The chain runs to 408 residues: Aminoacylase-1B (408 aa).

Zn(2+) is bound at residue histidine 80. Aspartate 82 is an active-site residue. Aspartate 113 lines the Zn(2+) pocket. Residue glutamate 147 is the Proton acceptor of the active site. Residues glutamate 148, glutamate 175, and histidine 373 each coordinate Zn(2+). Phosphoserine is present on serine 408.

This sequence belongs to the peptidase M20A family. In terms of assembly, homodimer. It depends on Zn(2+) as a cofactor. As to expression, expressed in kidney.

It is found in the cytoplasm. It catalyses the reaction an N-acyl-L-amino acid + H2O = an L-alpha-amino acid + a carboxylate. The catalysed reaction is an N-acetyl-L-cysteine-S-conjugate + H2O = an S-substituted L-cysteine + acetate. In terms of biological role, involved in the hydrolysis of N-acylated or N-acetylated amino acids (except L-aspartate). This Rattus norvegicus (Rat) protein is Aminoacylase-1B (Acy1b).